Reading from the N-terminus, the 215-residue chain is Somatotropin (215 aa).

Positions 1-25 (MAPGMRVCLLLLIAFTLLGPQRAAA) are cleaved as a signal peptide. His-44 lines the Zn(2+) pocket. Ser-130 carries the phosphoserine modification. A Zn(2+)-binding site is contributed by Glu-197.

The protein belongs to the somatotropin/prolactin family.

The protein localises to the secreted. In terms of biological role, plays an important role in growth control. Its major role in stimulating body growth is to stimulate the liver and other tissues to secrete IGF1. It stimulates both the differentiation and proliferation of myoblasts. It also stimulates amino acid uptake and protein synthesis in muscle and other tissues. The chain is Somatotropin (GH1) from Monodelphis domestica (Gray short-tailed opossum).